An 894-amino-acid chain; its full sequence is Alpha-actinin-2 (894 aa).

Positions 1-254 (MNQIEPGVQY…IMTYVSCFYH (254 aa)) are actin-binding. Calponin-homology (CH) domains follow at residues 38–142 (KQQR…LRFA) and 151–257 (TSAK…HAFA). Phosphothreonine is present on threonine 237. Spectrin repeat units follow at residues 281 to 391 (RLME…WLLN), 401 to 506 (HLAE…ALER), 516 to 627 (QLHL…SLQE), and 637 to 740 (RLRR…EVET). EF-hand domains are found at residues 753–788 (EQMNEFRASFNHFDRRKNGLMDHEDFRACLISMGYD) and 789–824 (LGEAEFARIMTLVDPNGQGTVTFQSFIDFMTRETAD). Ca(2+)-binding residues include aspartate 766, asparagine 770, aspartate 777, aspartate 802, asparagine 804, and threonine 808.

The protein belongs to the alpha-actinin family. In terms of assembly, homodimer; antiparallel. Also forms heterodimers with ACTN3. Interacts with ADAM12, MYOZ1, MYOZ2 and MYOZ3. Interacts via its C-terminal region with the LDB3 PDZ domain. Interacts with XIRP2. Interacts with DST (via N-terminus). Interacts with PARVB. Interacts with SYNPO2. Ubiquitinated by FBXL22, leading to proteasomal degradation.

Its subcellular location is the cytoplasm. The protein localises to the myofibril. It is found in the sarcomere. It localises to the z line. Its function is as follows. F-actin cross-linking protein which is thought to anchor actin to a variety of intracellular structures. This is a bundling protein. This is Alpha-actinin-2 (Actn2) from Mus musculus (Mouse).